The sequence spans 224 residues: N-(5'-phosphoribosyl)anthranilate isomerase (224 aa).

The protein belongs to the TrpF family.

The enzyme catalyses N-(5-phospho-beta-D-ribosyl)anthranilate = 1-(2-carboxyphenylamino)-1-deoxy-D-ribulose 5-phosphate. It participates in amino-acid biosynthesis; L-tryptophan biosynthesis; L-tryptophan from chorismate: step 3/5. The sequence is that of N-(5'-phosphoribosyl)anthranilate isomerase from Allorhizobium ampelinum (strain ATCC BAA-846 / DSM 112012 / S4) (Agrobacterium vitis (strain S4)).